A 440-amino-acid polypeptide reads, in one-letter code: Xylose isomerase (440 aa).

Residues aspartate 307 and aspartate 309 each contribute to the Mg(2+) site.

This sequence belongs to the xylose isomerase family. In terms of assembly, homotetramer. The cofactor is Mg(2+).

The protein resides in the cytoplasm. The catalysed reaction is alpha-D-xylose = alpha-D-xylulofuranose. The sequence is that of Xylose isomerase from Pectobacterium carotovorum subsp. carotovorum (strain PC1).